The following is a 543-amino-acid chain: Hydroxylamine reductase (543 aa).

The [4Fe-4S] cluster site is built by Cys5, Cys8, Cys17, and Cys23. The hybrid [4Fe-2O-2S] cluster site is built by His236, Glu260, Cys304, Cys398, Cys426, Cys451, Glu486, and Lys488. Cys398 is subject to Cysteine persulfide.

The protein belongs to the HCP family. The cofactor is [4Fe-4S] cluster. Requires hybrid [4Fe-2O-2S] cluster as cofactor.

The protein localises to the cytoplasm. The enzyme catalyses A + NH4(+) + H2O = hydroxylamine + AH2 + H(+). Catalyzes the reduction of hydroxylamine to form NH(3) and H(2)O. This is Hydroxylamine reductase from Bacteroides thetaiotaomicron (strain ATCC 29148 / DSM 2079 / JCM 5827 / CCUG 10774 / NCTC 10582 / VPI-5482 / E50).